Here is a 228-residue protein sequence, read N- to C-terminus: Cytidylate kinase (228 aa).

Residue 11–19 (GPAGTGKSS) participates in ATP binding.

This sequence belongs to the cytidylate kinase family. Type 1 subfamily.

The protein localises to the cytoplasm. It catalyses the reaction CMP + ATP = CDP + ADP. It carries out the reaction dCMP + ATP = dCDP + ADP. This is Cytidylate kinase from Mycobacterium avium (strain 104).